The following is a 174-amino-acid chain: Peptide deformylase (174 aa).

Residues C94 and H136 each coordinate Fe cation. Residue E137 is part of the active site. Residue H140 participates in Fe cation binding.

Belongs to the polypeptide deformylase family. Fe(2+) serves as cofactor.

The catalysed reaction is N-terminal N-formyl-L-methionyl-[peptide] + H2O = N-terminal L-methionyl-[peptide] + formate. In terms of biological role, removes the formyl group from the N-terminal Met of newly synthesized proteins. Requires at least a dipeptide for an efficient rate of reaction. N-terminal L-methionine is a prerequisite for activity but the enzyme has broad specificity at other positions. The sequence is that of Peptide deformylase from Rhizobium meliloti (strain 1021) (Ensifer meliloti).